The sequence spans 316 residues: HPr kinase/phosphorylase (316 aa).

Catalysis depends on residues H141 and K162. An ATP-binding site is contributed by G156–S163. S163 provides a ligand contact to Mg(2+). Residue D180 is the Proton acceptor; for phosphorylation activity. Proton donor; for dephosphorylation activity of the active site. An important for the catalytic mechanism of both phosphorylation and dephosphorylation region spans residues M204–D213. E205 serves as a coordination point for Mg(2+). Residue R246 is part of the active site. The important for the catalytic mechanism of dephosphorylation stretch occupies residues P267–R272.

The protein belongs to the HPrK/P family. In terms of assembly, homohexamer. Mg(2+) is required as a cofactor.

It carries out the reaction [HPr protein]-L-serine + ATP = [HPr protein]-O-phospho-L-serine + ADP + H(+). It catalyses the reaction [HPr protein]-O-phospho-L-serine + phosphate + H(+) = [HPr protein]-L-serine + diphosphate. Functionally, catalyzes the ATP- as well as the pyrophosphate-dependent phosphorylation of a specific serine residue in HPr, a phosphocarrier protein of the phosphoenolpyruvate-dependent sugar phosphotransferase system (PTS). HprK/P also catalyzes the pyrophosphate-producing, inorganic phosphate-dependent dephosphorylation (phosphorolysis) of seryl-phosphorylated HPr (P-Ser-HPr). The two antagonistic activities of HprK/P are regulated by several intracellular metabolites, which change their concentration in response to the absence or presence of rapidly metabolisable carbon sources (glucose, fructose, etc.) in the growth medium. Therefore, by controlling the phosphorylation state of HPr, HPrK/P is a sensor enzyme that plays a major role in the regulation of carbon metabolism and sugar transport: it mediates carbon catabolite repression (CCR), and regulates PTS-catalyzed carbohydrate uptake and inducer exclusion. The protein is HPr kinase/phosphorylase of Lactobacillus delbrueckii subsp. bulgaricus (strain ATCC 11842 / DSM 20081 / BCRC 10696 / JCM 1002 / NBRC 13953 / NCIMB 11778 / NCTC 12712 / WDCM 00102 / Lb 14).